The sequence spans 200 residues: Holliday junction resolvase RecU (200 aa).

T82, D84, E97, and Q116 together coordinate Mg(2+).

The protein belongs to the RecU family. Mg(2+) is required as a cofactor.

The protein resides in the cytoplasm. The enzyme catalyses Endonucleolytic cleavage at a junction such as a reciprocal single-stranded crossover between two homologous DNA duplexes (Holliday junction).. In terms of biological role, endonuclease that resolves Holliday junction intermediates in genetic recombination. Cleaves mobile four-strand junctions by introducing symmetrical nicks in paired strands. Promotes annealing of linear ssDNA with homologous dsDNA. Required for DNA repair, homologous recombination and chromosome segregation. This chain is Holliday junction resolvase RecU, found in Streptococcus sanguinis (strain SK36).